Consider the following 382-residue polypeptide: Alcohol dehydrogenase 4 (382 aa).

Residues D40, N72, G99, S100, T139, T140, T148, F150, K161, and G183 each coordinate NAD(+). D195, H199, and H264 together coordinate Fe(2+). NAD(+) contacts are provided by H268 and H278. H278 provides a ligand contact to Fe(2+).

This sequence belongs to the iron-containing alcohol dehydrogenase family. As to quaternary structure, homodimer. The cofactor is Zn(2+). Fe(2+) is required as a cofactor.

The protein localises to the mitochondrion. It catalyses the reaction a primary alcohol + NAD(+) = an aldehyde + NADH + H(+). The enzyme catalyses ethanol + NAD(+) = acetaldehyde + NADH + H(+). Inhibited by EDTA. Functionally, alcohol dehydrogenase specific for ethanol. Acts mainyl as a mitochondrial formaldehyde dehydrogenase and has no effect on ethanol production. Shows drastically reduced activity towards primary alcohols from 4 carbon atoms upward. Isomers of aliphatic alcohol, as well as secondary alcohols and glycerol are not used at all. The role of ADH4 in yeast metabolism is not yet known, but ADH4 is not responsible for the production of ethanol during growth on glucose nor responsible for the oxidation of ethanol to acetaldehyde. This chain is Alcohol dehydrogenase 4, found in Saccharomyces cerevisiae (strain ATCC 204508 / S288c) (Baker's yeast).